The primary structure comprises 439 residues: Lipid-A-disaccharide synthase (439 aa).

The segment at 1-35 (MKEIGNRESGIVDGQRNGASVGSDPTALPIPHSPL) is disordered.

It belongs to the LpxB family.

The catalysed reaction is a lipid X + a UDP-2-N,3-O-bis[(3R)-3-hydroxyacyl]-alpha-D-glucosamine = a lipid A disaccharide + UDP + H(+). Its pathway is bacterial outer membrane biogenesis; LPS lipid A biosynthesis. Condensation of UDP-2,3-diacylglucosamine and 2,3-diacylglucosamine-1-phosphate to form lipid A disaccharide, a precursor of lipid A, a phosphorylated glycolipid that anchors the lipopolysaccharide to the outer membrane of the cell. The polypeptide is Lipid-A-disaccharide synthase (Xanthomonas euvesicatoria pv. vesicatoria (strain 85-10) (Xanthomonas campestris pv. vesicatoria)).